The chain runs to 578 residues: GRAM domain-containing protein 4 (578 aa).

Disordered regions lie at residues 23–58 (ESPN…AGPG) and 136–159 (TEEQ…ERRS). S24 and S28 each carry phosphoserine. The segment covering 44–53 (SPRDSEELRD) has biased composition (basic and acidic residues). Residues 83 to 143 (HLEIALLEKH…ARTEEQMAQQ (61 aa)) adopt a coiled-coil conformation. The next 3 helical transmembrane spans lie at 240–260 (VYMN…LAIL), 334–354 (ITQK…FFPY), and 356–376 (LVGL…DFIF). The segment at 415 to 435 (QTTSSRSYVPSAPAGLGKEED) is disordered. In terms of domain architecture, GRAM spans 445-523 (GNFHEIFNLT…VDITDIQKYK (79 aa)).

As to quaternary structure, interacts with RTN4 (isoform B). As to expression, expressed in lung and in primary lung squamous cell carcinoma (LSCC).

Its subcellular location is the mitochondrion membrane. It is found in the endoplasmic reticulum membrane. In terms of biological role, plays a role as a mediator of E2F1-induced apoptosis in the absence of p53/TP53. Plays a role as a mediator of E2F1-induced apoptosis in the absence of p53/TP53. Inhibits TLR9 response to nucelic acids and regulates TLR9-mediated innate immune response. The sequence is that of GRAM domain-containing protein 4 from Homo sapiens (Human).